A 218-amino-acid polypeptide reads, in one-letter code: tRNA (guanine-N(7)-)-methyltransferase (218 aa).

The disordered stretch occupies residues 1–25 (MRLKNKPWANELVEEHPESALDRPN). Residues 13-25 (VEEHPESALDRPN) are compositionally biased toward basic and acidic residues. Residues glutamate 45, glutamate 70, aspartate 97, and aspartate 119 each contribute to the S-adenosyl-L-methionine site. Aspartate 119 is an active-site residue. Substrate is bound at residue lysine 123. An interaction with RNA region spans residues 125 to 130 (RHEKRR). Substrate is bound by residues aspartate 155 and 195–198 (TEYE).

Belongs to the class I-like SAM-binding methyltransferase superfamily. TrmB family.

It catalyses the reaction guanosine(46) in tRNA + S-adenosyl-L-methionine = N(7)-methylguanosine(46) in tRNA + S-adenosyl-L-homocysteine. It participates in tRNA modification; N(7)-methylguanine-tRNA biosynthesis. In terms of biological role, catalyzes the formation of N(7)-methylguanine at position 46 (m7G46) in tRNA. The polypeptide is tRNA (guanine-N(7)-)-methyltransferase (Lactobacillus delbrueckii subsp. bulgaricus (strain ATCC BAA-365 / Lb-18)).